Here is a 408-residue protein sequence, read N- to C-terminus: Cytochrome bc1 complex Rieske iron-sulfur subunit (408 aa).

Transmembrane regions (helical) follow at residues 56 to 76, 98 to 118, and 162 to 182; these read VTFW…TYIF, MLGI…VLYV, and LIMG…IAPM. Positions 293 to 390 constitute a Rieske domain; it reads HGPRNAVMLI…ITVDEEGYLI (98 aa). [2Fe-2S] cluster-binding residues include C333, H335, C352, and H355. C338 and C354 are oxidised to a cystine.

Belongs to the Rieske iron-sulfur protein family. As to quaternary structure, the cytochrome bc1 complex is composed of a cytochrome b (QcrB), the Rieske iron-sulfur protein (QcrA) and a diheme cytochrome c (QcrC) subunit. The bc1 complex forms a supercomplex with cytochrome c oxidase (cytochrome aa3). Requires [2Fe-2S] cluster as cofactor.

It is found in the cell membrane. Iron-sulfur subunit of the cytochrome bc1 complex, an essential component of the respiratory electron transport chain required for ATP synthesis. The bc1 complex catalyzes the oxidation of menaquinol and the reduction of cytochrome c in the respiratory chain. The bc1 complex operates through a Q-cycle mechanism that couples electron transfer to generation of the proton gradient that drives ATP synthesis. In Corynebacterium glutamicum (strain ATCC 13032 / DSM 20300 / JCM 1318 / BCRC 11384 / CCUG 27702 / LMG 3730 / NBRC 12168 / NCIMB 10025 / NRRL B-2784 / 534), this protein is Cytochrome bc1 complex Rieske iron-sulfur subunit (qcrA).